A 442-amino-acid polypeptide reads, in one-letter code: 5-methylthioadenosine/S-adenosylhomocysteine deaminase (442 aa).

Positions 72 and 74 each coordinate Zn(2+). Residues Glu-101 and His-194 each coordinate substrate. His-221 is a Zn(2+) binding site. The substrate site is built by Glu-224 and Asp-309. Asp-309 is a binding site for Zn(2+).

The protein belongs to the metallo-dependent hydrolases superfamily. MTA/SAH deaminase family. The cofactor is Zn(2+).

It carries out the reaction S-adenosyl-L-homocysteine + H2O + H(+) = S-inosyl-L-homocysteine + NH4(+). The enzyme catalyses S-methyl-5'-thioadenosine + H2O + H(+) = S-methyl-5'-thioinosine + NH4(+). In terms of biological role, catalyzes the deamination of 5-methylthioadenosine and S-adenosyl-L-homocysteine into 5-methylthioinosine and S-inosyl-L-homocysteine, respectively. Is also able to deaminate adenosine. The polypeptide is 5-methylthioadenosine/S-adenosylhomocysteine deaminase (Teredinibacter turnerae (strain ATCC 39867 / T7901)).